Consider the following 720-residue polypeptide: Casein kinase II subunit alpha'-interacting protein (720 aa).

A compositionally biased stretch (polar residues) spans 227–249 (LSSPSFTNRLQRNSFPPTSSSLE). 5 disordered regions span residues 227–250 (LSSPSFTNRLQRNSFPPTSSSLEF), 264–303 (KPLKIPVSNSNNNVFSLPLSPAKSRKSTPSPHSFLPSRRL), 333–366 (QNTASLSDKQRPRQLPSIHPKPNPSGQRVSSPKP), 602–640 (TQVQGPSSSSSSSCSSVSSSSSASSIGRPSPPTPWVDPT), and 678–698 (LRQSPPVKAKPVRSHNSKCLK). Residues 608 to 626 (SSSSSSSCSSVSSSSSASS) are compositionally biased toward low complexity. A compositionally biased stretch (pro residues) spans 630 to 640 (PSPPTPWVDPT). Residues 687–698 (KPVRSHNSKCLK) are compositionally biased toward basic residues.

In terms of assembly, interacts (via C-terminus) with CSNK2A2. In terms of processing, phosphorylated by CK2 (casein kinase II), specifically by complexes containing catalytic subunit CSNK2A2. Expressed exclusively in testis (at protein level). Within testis, expressed mainly in the intermediate compartment of the seminiferous tubules with weaker expression in the basal and adluminal compartments.

The protein resides in the nucleus. Functionally, may play a role in chromatin regulation of male germ cells. This chain is Casein kinase II subunit alpha'-interacting protein, found in Mus musculus (Mouse).